A 642-amino-acid chain; its full sequence is Nucleolar GTP-binding protein 1 (642 aa).

The region spanning 168-340 (RTLLICGYPN…VRNKACEKLL (173 aa)) is the OBG-type G domain. GTP is bound by residues 174–181 (GYPNVGKS), 220–224 (DTPGI), and 288–291 (NKTD). The tract at residues 585–642 (MDGVADASMRSKADRMAKLHRRERNRQARQGEADRHATASLPKHLFSGKRGIGSNDRR) is disordered. The span at 609–621 (NRQARQGEADRHA) shows a compositional bias: basic and acidic residues.

Belongs to the TRAFAC class OBG-HflX-like GTPase superfamily. OBG GTPase family. NOG subfamily.

Its subcellular location is the nucleus. It is found in the nucleolus. Its function is as follows. Involved in the biogenesis of the 60S ribosomal subunit. The sequence is that of Nucleolar GTP-binding protein 1 (NOG1) from Eremothecium gossypii (strain ATCC 10895 / CBS 109.51 / FGSC 9923 / NRRL Y-1056) (Yeast).